The primary structure comprises 238 residues: Uridylate kinase (238 aa).

12–15 is a binding site for ATP; the sequence is KLSG. Glycine 54 is a binding site for UMP. Positions 55 and 59 each coordinate ATP. UMP-binding positions include aspartate 74 and 135-142; that span reads TGNPYFTT. The ATP site is built by threonine 162, asparagine 163, tyrosine 168, and aspartate 171.

It belongs to the UMP kinase family. In terms of assembly, homohexamer.

It localises to the cytoplasm. It catalyses the reaction UMP + ATP = UDP + ADP. Its pathway is pyrimidine metabolism; CTP biosynthesis via de novo pathway; UDP from UMP (UMPK route): step 1/1. Its activity is regulated as follows. Inhibited by UTP. Functionally, catalyzes the reversible phosphorylation of UMP to UDP. The chain is Uridylate kinase from Rhodopseudomonas palustris (strain ATCC BAA-98 / CGA009).